A 65-amino-acid polypeptide reads, in one-letter code: Large ribosomal subunit protein bL35 (65 aa).

The tract at residues 1-25 (MPKMKSHRGAAKRFKKTGTGKLKRA) is disordered.

It belongs to the bacterial ribosomal protein bL35 family.

The polypeptide is Large ribosomal subunit protein bL35 (Clostridium botulinum (strain Alaska E43 / Type E3)).